The primary structure comprises 334 residues: D-fructose 1,6-bisphosphatase class 2/sedoheptulose 1,7-bisphosphatase (334 aa).

Mn(2+) contacts are provided by Asp-33, Glu-57, Asp-85, and Glu-88. Substrate is bound by residues Glu-88–Thr-90, Tyr-119, Arg-164–Arg-166, and Asp-186–Asp-188. Glu-213 contributes to the Mn(2+) binding site.

The protein belongs to the FBPase class 2 family. As to quaternary structure, homotetramer. Mn(2+) serves as cofactor.

The enzyme catalyses beta-D-fructose 1,6-bisphosphate + H2O = beta-D-fructose 6-phosphate + phosphate. The catalysed reaction is D-sedoheptulose 1,7-bisphosphate + H2O = D-sedoheptulose 7-phosphate + phosphate. The protein operates within carbohydrate biosynthesis; Calvin cycle. In terms of biological role, catalyzes the hydrolysis of fructose 1,6-bisphosphate (Fru 1,6-P2) and sedoheptulose 1,7-bisphosphate (Sed 1,7-P2) to fructose 6-phosphate and sedoheptulose 7-phosphate, respectively. This is D-fructose 1,6-bisphosphatase class 2/sedoheptulose 1,7-bisphosphatase from Prochlorococcus marinus (strain MIT 9303).